We begin with the raw amino-acid sequence, 613 residues long: Penicillin-binding protein activator LpoA (613 aa).

Residues Met1–Gly29 form the signal peptide. Cys30 is lipidated: N-palmitoyl cysteine. Cys30 carries the S-diacylglycerol cysteine lipid modification.

Belongs to the LpoA family. In terms of assembly, interacts with PBP1a.

Its subcellular location is the cell outer membrane. In terms of biological role, regulator of peptidoglycan synthesis that is essential for the function of penicillin-binding protein 1A (PBP1a). This is Penicillin-binding protein activator LpoA from Photobacterium profundum (strain SS9).